The chain runs to 513 residues: ATP synthase subunit alpha 2 (513 aa).

Position 169-176 (169-176) interacts with ATP; the sequence is GDRQCGKT.

Belongs to the ATPase alpha/beta chains family. F-type ATPases have 2 components, CF(1) - the catalytic core - and CF(0) - the membrane proton channel. CF(1) has five subunits: alpha(3), beta(3), gamma(1), delta(1), epsilon(1). CF(0) has three main subunits: a(1), b(2) and c(9-12). The alpha and beta chains form an alternating ring which encloses part of the gamma chain. CF(1) is attached to CF(0) by a central stalk formed by the gamma and epsilon chains, while a peripheral stalk is formed by the delta and b chains.

It is found in the cell inner membrane. It catalyses the reaction ATP + H2O + 4 H(+)(in) = ADP + phosphate + 5 H(+)(out). Its function is as follows. Produces ATP from ADP in the presence of a proton gradient across the membrane. The alpha chain is a regulatory subunit. The protein is ATP synthase subunit alpha 2 of Paraburkholderia xenovorans (strain LB400).